A 313-amino-acid chain; its full sequence is Formate-nitrite transporter (313 aa).

Over Met1–Ala46 the chain is Cytoplasmic. Residues Ile47–Phe67 traverse the membrane as a helical segment. Over Tyr68–Gly77 the chain is Extracellular. A helical transmembrane segment spans residues Ile78 to Ala98. The Cytoplasmic segment spans residues Thr99–Arg127. Residues Val128–Ser148 traverse the membrane as a helical segment. Residues His149–Cys184 are Extracellular-facing. A helical transmembrane segment spans residues Val185 to Ile205. Topologically, residues Lys206–Gly210 are cytoplasmic. The chain crosses the membrane as a helical span at residues Met211 to Ile231. Residues Ala232–Asn256 lie on the Extracellular side of the membrane. The helical transmembrane segment at Leu257–Phe277 threads the bilayer. Residues Tyr278–Arg313 lie on the Cytoplasmic side of the membrane. Positions Thr290–Arg313 are disordered. The span at Gly298–Arg313 shows a compositional bias: polar residues.

This sequence belongs to the FNT transporter (TC 1.A.16) family. As to quaternary structure, homopentamer.

The protein localises to the cell membrane. The protein resides in the vacuole membrane. The catalysed reaction is (S)-lactate(in) + H(+)(in) = (S)-lactate(out) + H(+)(out). It catalyses the reaction formate(in) + H(+)(in) = formate(out) + H(+)(out). It carries out the reaction pyruvate(out) + H(+)(out) = pyruvate(in) + H(+)(in). The enzyme catalyses acetate(out) + H(+)(out) = acetate(in) + H(+)(in). Its activity is regulated as follows. Inhibited by the Malaria Box compound MMV007839 and its derivatives BH296 and BH267.meta. Its function is as follows. Monocarboxylate-proton symporter that mediates the efflux of the waste product lactate in the intraerythrocytic parasites; active in acidic-to-neutral pH range. Transports L-lactate. The protein is Formate-nitrite transporter of Plasmodium vivax.